We begin with the raw amino-acid sequence, 373 residues long: Probable quinol oxidase subunit 2 (373 aa).

The first 19 residues, 1-19 (MSKFKSLLLLFGSLILLSG), serve as a signal peptide directing secretion. Cys20 is lipidated: N-palmitoyl cysteine. Cys20 is lipidated: S-diacylglycerol cysteine. The next 2 membrane-spanning stretches (helical) occupy residues 38 to 58 (FLIM…LILF) and 82 to 102 (LETI…IPTV). 2 stretches are compositionally biased toward basic and acidic residues: residues 292–320 (EERT…ERHG) and 339–373 (EESH…GGGH). The disordered stretch occupies residues 292–373 (EERTADVLDK…KKDHENGGGH (82 aa)).

It belongs to the cytochrome c oxidase subunit 2 family.

The protein resides in the cell membrane. The catalysed reaction is 2 a quinol + O2 = 2 a quinone + 2 H2O. Catalyzes quinol oxidation with the concomitant reduction of oxygen to water. Subunit II transfers the electrons from a quinol to the binuclear center of the catalytic subunit I. The polypeptide is Probable quinol oxidase subunit 2 (qoxA) (Staphylococcus saprophyticus subsp. saprophyticus (strain ATCC 15305 / DSM 20229 / NCIMB 8711 / NCTC 7292 / S-41)).